Consider the following 176-residue polypeptide: Transcriptional repressor MprA (176 aa).

The HTH marR-type domain occupies 26–160; that stretch reads EILLTRLCMH…LEQITRKLLS (135 aa).

Functionally, negative regulator of the multidrug operon emrAB. The polypeptide is Transcriptional repressor MprA (mprA) (Escherichia coli O157:H7).